The primary structure comprises 130 residues: Small ribosomal subunit protein uS11c (130 aa).

This sequence belongs to the universal ribosomal protein uS11 family. Part of the 30S ribosomal subunit.

The protein localises to the plastid. Its subcellular location is the chloroplast. This chain is Small ribosomal subunit protein uS11c, found in Pinus thunbergii (Japanese black pine).